The following is a 414-amino-acid chain: Sec-independent protein translocase protein TatC (414 aa).

Positions 1 to 21 are disordered; that stretch reads MTQSTSVSKGGRVSRKAKKNP. 6 helical membrane passes run 45–65, 119–139, 157–177, 200–220, 238–258, and 259–279; these read IAVT…AWAI, GGLA…WRFI, IAGF…PMGL, FVIA…FTAM, IMIV…DPIS, and MLVL…FTRI. Residues 315–414 are disordered; sequence IYDGDHKGIA…IQSSSFDDVL (100 aa). A compositionally biased stretch (gly residues) spans 323–336; sequence IAGGGDAHPAGGSG. The span at 345-357 shows a compositional bias: low complexity; it reads TAPTRAPSASESP. Over residues 403–414 the composition is skewed to polar residues; that stretch reads DTIQSSSFDDVL.

It belongs to the TatC family. The Tat system comprises two distinct complexes: a TatABC complex, containing multiple copies of TatA, TatB and TatC subunits, and a separate TatA complex, containing only TatA subunits. Substrates initially bind to the TatABC complex, which probably triggers association of the separate TatA complex to form the active translocon.

Its subcellular location is the cell membrane. Its function is as follows. Part of the twin-arginine translocation (Tat) system that transports large folded proteins containing a characteristic twin-arginine motif in their signal peptide across membranes. Together with TatB, TatC is part of a receptor directly interacting with Tat signal peptides. This is Sec-independent protein translocase protein TatC from Corynebacterium kroppenstedtii (strain DSM 44385 / JCM 11950 / CIP 105744 / CCUG 35717).